A 138-amino-acid polypeptide reads, in one-letter code: Cysteine desulfuration protein SufE (138 aa).

The active-site Cysteine persulfide intermediate is C51.

It belongs to the SufE family. Homodimer. Interacts with SufS.

It localises to the cytoplasm. Its pathway is cofactor biosynthesis; iron-sulfur cluster biosynthesis. Its function is as follows. Participates in cysteine desulfuration mediated by SufS. Cysteine desulfuration mobilizes sulfur from L-cysteine to yield L-alanine and constitutes an essential step in sulfur metabolism for biosynthesis of a variety of sulfur-containing biomolecules. Functions as a sulfur acceptor for SufS, by mediating the direct transfer of the sulfur atom from the S-sulfanylcysteine of SufS, an intermediate product of cysteine desulfuration process. This Pectobacterium carotovorum subsp. carotovorum (strain PC1) protein is Cysteine desulfuration protein SufE.